The primary structure comprises 99 residues: DNA-binding protein Fis (99 aa).

Positions 75 to 94 (QTRAALMLGVNRGTLRKKLK) form a DNA-binding region, H-T-H motif.

It belongs to the transcriptional regulatory Fis family. In terms of assembly, homodimer.

In terms of biological role, activates ribosomal RNA transcription. Plays a direct role in upstream activation of rRNA promoters. In Actinobacillus succinogenes (strain ATCC 55618 / DSM 22257 / CCUG 43843 / 130Z), this protein is DNA-binding protein Fis.